The primary structure comprises 353 residues: Phosphate acyltransferase (353 aa).

The protein belongs to the PlsX family. Homodimer. Probably interacts with PlsY.

The protein resides in the cytoplasm. It catalyses the reaction a fatty acyl-[ACP] + phosphate = an acyl phosphate + holo-[ACP]. The protein operates within lipid metabolism; phospholipid metabolism. Catalyzes the reversible formation of acyl-phosphate (acyl-PO(4)) from acyl-[acyl-carrier-protein] (acyl-ACP). This enzyme utilizes acyl-ACP as fatty acyl donor, but not acyl-CoA. The chain is Phosphate acyltransferase from Nitrosospira multiformis (strain ATCC 25196 / NCIMB 11849 / C 71).